We begin with the raw amino-acid sequence, 499 residues long: Cobyric acid synthase (499 aa).

The GATase cobBQ-type domain occupies 266–449; sequence RLEIAVVRLP…LHGLFDNHLW (184 aa). Cysteine 344 acts as the Nucleophile in catalysis. Residue histidine 441 is part of the active site.

The protein belongs to the CobB/CobQ family. CobQ subfamily.

It functions in the pathway cofactor biosynthesis; adenosylcobalamin biosynthesis. Catalyzes amidations at positions B, D, E, and G on adenosylcobyrinic A,C-diamide. NH(2) groups are provided by glutamine, and one molecule of ATP is hydrogenolyzed for each amidation. The sequence is that of Cobyric acid synthase from Synechococcus sp. (strain JA-2-3B'a(2-13)) (Cyanobacteria bacterium Yellowstone B-Prime).